Consider the following 74-residue polypeptide: U3-agatoxin-Ao1h (74 aa).

The signal sequence occupies residues 1 to 20; it reads MRAIISLLLISTMVFGVIEA. Residues 21–34 constitute a propeptide that is removed on maturation; that stretch reads VSVQKSLKIFEGER. Disulfide bonds link Cys-37–Cys-53, Cys-44–Cys-58, Cys-52–Cys-68, and Cys-60–Cys-66. Residue Asn-72 is modified to Asparagine amide.

The protein belongs to the neurotoxin 07 (Beta/delta-agtx) family. 03 (aga-4) subfamily. Aga sub-subfamily. As to expression, expressed by the venom gland.

The protein localises to the secreted. Its function is as follows. Insecticidal neurotoxin that induces an irreversible spastic paralysis when injected into insects. Modifies presynaptic voltage-gated sodium channels (Nav), causing them to open at the normal resting potential of the nerve. This leads to spontaneous release of neurotransmitter and repetitive action potentials in motor neurons. The protein is U3-agatoxin-Ao1h of Agelena orientalis (Funnel-web spider).